Here is a 557-residue protein sequence, read N- to C-terminus: 2-succinyl-5-enolpyruvyl-6-hydroxy-3-cyclohexene-1-carboxylate synthase (557 aa).

The protein belongs to the TPP enzyme family. MenD subfamily. Homodimer. It depends on Mg(2+) as a cofactor. The cofactor is Mn(2+). Requires thiamine diphosphate as cofactor.

The catalysed reaction is isochorismate + 2-oxoglutarate + H(+) = 5-enolpyruvoyl-6-hydroxy-2-succinyl-cyclohex-3-ene-1-carboxylate + CO2. Its pathway is quinol/quinone metabolism; 1,4-dihydroxy-2-naphthoate biosynthesis; 1,4-dihydroxy-2-naphthoate from chorismate: step 2/7. It participates in quinol/quinone metabolism; menaquinone biosynthesis. Functionally, catalyzes the thiamine diphosphate-dependent decarboxylation of 2-oxoglutarate and the subsequent addition of the resulting succinic semialdehyde-thiamine pyrophosphate anion to isochorismate to yield 2-succinyl-5-enolpyruvyl-6-hydroxy-3-cyclohexene-1-carboxylate (SEPHCHC). The chain is 2-succinyl-5-enolpyruvyl-6-hydroxy-3-cyclohexene-1-carboxylate synthase from Staphylococcus aureus (strain Mu3 / ATCC 700698).